The primary structure comprises 601 residues: Methionine--tRNA ligase (601 aa).

The 'HIGH' region motif lies at 21–31; that stretch reads PYANGPRHIGH. Residues cysteine 153, cysteine 156, cysteine 166, and cysteine 169 each contribute to the Zn(2+) site. Asparagine 361 contacts ATP.

It belongs to the class-I aminoacyl-tRNA synthetase family. MetG type 1 subfamily. Monomer. Zn(2+) serves as cofactor.

The protein resides in the cytoplasm. The enzyme catalyses tRNA(Met) + L-methionine + ATP = L-methionyl-tRNA(Met) + AMP + diphosphate. Its function is as follows. Is required not only for elongation of protein synthesis but also for the initiation of all mRNA translation through initiator tRNA(fMet) aminoacylation. In Cutibacterium acnes (strain DSM 16379 / KPA171202) (Propionibacterium acnes), this protein is Methionine--tRNA ligase.